A 335-amino-acid polypeptide reads, in one-letter code: MPIRHCIVHLIDKKPDGSPAVLHARDSELAASDAIENLLADLNDSYNAKQGKAWGFFHGESGAYPLSGWLKQYLEGEKDFTAFSRVAVEHLQKLMEESNLSTGGHILFAHYQQGMTEYLAIALLHHSEGVAVNAELDVTPSRHLDLGQLHLAARINLSEWKNNQNSKQYISFIKGKNGKKVSDYFRDFIGCQEGVDGPGETRTLLKAFSDFVESEDLPEESAREKTQTLVEYATTQTKLGEPVTLEELSSLIDEDRPKAFYDHIRNKDYGLSPEIPADKRTLNQFRRFTGRAEGLSISFEAHLLGDKVEYDEAAGTLIIKGLPTTLVDQLKRRKD.

It belongs to the YejK family.

It localises to the cytoplasm. Its subcellular location is the nucleoid. The protein is Nucleoid-associated protein Pput_1012 of Pseudomonas putida (strain ATCC 700007 / DSM 6899 / JCM 31910 / BCRC 17059 / LMG 24140 / F1).